Consider the following 357-residue polypeptide: Selenide, water dikinase (357 aa).

The active site involves Cys25. ATP-binding positions include Lys28 and 57–59 (TAD). Asp60 serves as a coordination point for Mg(2+). Residues Asp77, Asp100, and 148–150 (GHS) contribute to the ATP site. Asp100 serves as a coordination point for Mg(2+). Asp236 serves as a coordination point for Mg(2+).

It belongs to the selenophosphate synthase 1 family. Class I subfamily. In terms of assembly, homodimer. Mg(2+) serves as cofactor.

The enzyme catalyses hydrogenselenide + ATP + H2O = selenophosphate + AMP + phosphate + 2 H(+). Synthesizes selenophosphate from selenide and ATP. This chain is Selenide, water dikinase, found in Pseudomonas straminea.